The following is a 131-amino-acid chain: Ribonuclease P protein component (131 aa).

Belongs to the RnpA family. In terms of assembly, consists of a catalytic RNA component (M1 or rnpB) and a protein subunit.

It catalyses the reaction Endonucleolytic cleavage of RNA, removing 5'-extranucleotides from tRNA precursor.. RNaseP catalyzes the removal of the 5'-leader sequence from pre-tRNA to produce the mature 5'-terminus. It can also cleave other RNA substrates such as 4.5S RNA. The protein component plays an auxiliary but essential role in vivo by binding to the 5'-leader sequence and broadening the substrate specificity of the ribozyme. The protein is Ribonuclease P protein component of Stutzerimonas stutzeri (strain A1501) (Pseudomonas stutzeri).